The following is a 158-amino-acid chain: Phosphopantetheine adenylyltransferase (158 aa).

Ser9 is a binding site for substrate. Residues 9–10 and His17 contribute to the ATP site; that span reads SF. Substrate contacts are provided by Lys41, Thr73, and Arg87. Residues 88 to 90, Glu98, and 122 to 128 contribute to the ATP site; these read GLR and NQNISSS.

The protein belongs to the bacterial CoaD family. In terms of assembly, homohexamer. Mg(2+) is required as a cofactor.

It is found in the cytoplasm. The catalysed reaction is (R)-4'-phosphopantetheine + ATP + H(+) = 3'-dephospho-CoA + diphosphate. The protein operates within cofactor biosynthesis; coenzyme A biosynthesis; CoA from (R)-pantothenate: step 4/5. Reversibly transfers an adenylyl group from ATP to 4'-phosphopantetheine, yielding dephospho-CoA (dPCoA) and pyrophosphate. This Leuconostoc citreum (strain KM20) protein is Phosphopantetheine adenylyltransferase.